A 273-amino-acid chain; its full sequence is Flagellin FljO (273 aa).

The protein belongs to the bacterial flagellin family. In C.crescentus, the flagellar filament is composed of multiple flagellins of 29 kDa; 27 kDa and 25 kDa.

The protein localises to the secreted. It localises to the bacterial flagellum. Its function is as follows. Flagellin is the subunit protein which polymerizes to form the filaments of bacterial flagella. This is Flagellin FljO (fljO) from Caulobacter vibrioides (strain ATCC 19089 / CIP 103742 / CB 15) (Caulobacter crescentus).